We begin with the raw amino-acid sequence, 276 residues long: Large ribosomal subunit protein uL2 (276 aa).

Disordered stretches follow at residues 37-59 (QFQKSGRNNNGHITTRHKGGGHK) and 225-276 (VMNP…RHKR). Polar residues predominate over residues 39-49 (QKSGRNNNGHI). The span at 50-59 (TTRHKGGGHK) shows a compositional bias: basic residues.

It belongs to the universal ribosomal protein uL2 family. In terms of assembly, part of the 50S ribosomal subunit. Forms a bridge to the 30S subunit in the 70S ribosome.

Functionally, one of the primary rRNA binding proteins. Required for association of the 30S and 50S subunits to form the 70S ribosome, for tRNA binding and peptide bond formation. It has been suggested to have peptidyltransferase activity; this is somewhat controversial. Makes several contacts with the 16S rRNA in the 70S ribosome. The protein is Large ribosomal subunit protein uL2 of Cupriavidus pinatubonensis (strain JMP 134 / LMG 1197) (Cupriavidus necator (strain JMP 134)).